An 860-amino-acid chain; its full sequence is DNA mismatch repair protein MutS (860 aa).

Position 607–614 (607–614) interacts with ATP; sequence GPNMSGKS.

This sequence belongs to the DNA mismatch repair MutS family.

In terms of biological role, this protein is involved in the repair of mismatches in DNA. It is possible that it carries out the mismatch recognition step. This protein has a weak ATPase activity. The polypeptide is DNA mismatch repair protein MutS (Listeria innocua serovar 6a (strain ATCC BAA-680 / CLIP 11262)).